Reading from the N-terminus, the 590-residue chain is L-asparaginase (590 aa).

Residues 6–357 (AHVLVLYTGG…VEKKAMMVKN (352 aa)) form the Asparaginase/glutaminase domain. The active-site O-isoaspartyl threonine intermediate is the Thr-16. The asparaginase stretch occupies residues 44-351 (NDDDYVSTYY…KDCWELVEKK (308 aa)). Substrate is bound by residues 85–87 (DSS) and 117–118 (TD). ANK repeat units follow at residues 398–427 (IFPQLLCYAASNGDIEMLKALHENGVDLSV), 431–460 (NGRNALHVAASAGHVGAVKYLLTQGVSFHL), 497–526 (RLGVELCLCASYGDTETLNSWLAAGADINQ), and 530–559 (NGETALHIAVKSRNKQLVHYLLDRDADPYK).

The protein in the N-terminal section; belongs to the asparaginase 1 family. May be present in the larval cuticle.

It carries out the reaction L-asparagine + H2O = L-aspartate + NH4(+). The sequence is that of L-asparaginase from Dirofilaria immitis (Canine heartworm).